The sequence spans 277 residues: Diaminopimelate epimerase (277 aa).

2 residues coordinate substrate: asparagine 11 and asparagine 62. The active-site Proton donor is cysteine 71. Substrate-binding positions include 72–73 (GN), asparagine 160, asparagine 193, and 211–212 (ER). Cysteine 220 functions as the Proton acceptor in the catalytic mechanism. Residue 221–222 (GT) participates in substrate binding.

Belongs to the diaminopimelate epimerase family. Homodimer.

The protein resides in the cytoplasm. It catalyses the reaction (2S,6S)-2,6-diaminopimelate = meso-2,6-diaminopimelate. Its pathway is amino-acid biosynthesis; L-lysine biosynthesis via DAP pathway; DL-2,6-diaminopimelate from LL-2,6-diaminopimelate: step 1/1. Its function is as follows. Catalyzes the stereoinversion of LL-2,6-diaminopimelate (L,L-DAP) to meso-diaminopimelate (meso-DAP), a precursor of L-lysine. The sequence is that of Diaminopimelate epimerase from Methanococcus maripaludis (strain C5 / ATCC BAA-1333).